The sequence spans 575 residues: Amino-acid acetyltransferase, mitochondrial (575 aa).

Residues 1–35 (MSKLRNLNRQFISNLKTHETVTNAKRNLILSILKS) constitute a mitochondrion transit peptide. Positions 398–557 (FTLNNLVQDG…QGIPGGVNIH (160 aa)) constitute an N-acetyltransferase domain.

This sequence belongs to the acetyltransferase family.

It is found in the mitochondrion. It catalyses the reaction L-glutamate + acetyl-CoA = N-acetyl-L-glutamate + CoA + H(+). The protein operates within amino-acid biosynthesis; L-arginine biosynthesis; N(2)-acetyl-L-ornithine from L-glutamate: step 1/4. In terms of biological role, N-acetylglutamate synthase involved in arginine biosynthesis. This Debaryomyces hansenii (strain ATCC 36239 / CBS 767 / BCRC 21394 / JCM 1990 / NBRC 0083 / IGC 2968) (Yeast) protein is Amino-acid acetyltransferase, mitochondrial (ARG2).